The sequence spans 296 residues: Light-independent protochlorophyllide reductase iron-sulfur ATP-binding protein (296 aa).

ATP-binding positions include 39–44 (GIGKST) and Lys-68. Ser-43 provides a ligand contact to Mg(2+). Cys-124 and Cys-158 together coordinate [4Fe-4S] cluster. An ATP-binding site is contributed by 209 to 210 (NR).

This sequence belongs to the NifH/BchL/ChlL family. In terms of assembly, homodimer. Protochlorophyllide reductase is composed of three subunits; ChlL, ChlN and ChlB. [4Fe-4S] cluster serves as cofactor.

The enzyme catalyses chlorophyllide a + oxidized 2[4Fe-4S]-[ferredoxin] + 2 ADP + 2 phosphate = protochlorophyllide a + reduced 2[4Fe-4S]-[ferredoxin] + 2 ATP + 2 H2O. It functions in the pathway porphyrin-containing compound metabolism; chlorophyll biosynthesis (light-independent). Component of the dark-operative protochlorophyllide reductase (DPOR) that uses Mg-ATP and reduced ferredoxin to reduce ring D of protochlorophyllide (Pchlide) to form chlorophyllide a (Chlide). This reaction is light-independent. The L component serves as a unique electron donor to the NB-component of the complex, and binds Mg-ATP. The sequence is that of Light-independent protochlorophyllide reductase iron-sulfur ATP-binding protein from Prochlorococcus marinus (strain MIT 9313).